A 445-amino-acid polypeptide reads, in one-letter code: Transcriptional enhancer factor TEF-4 (445 aa).

2 disordered regions span residues 1-47 and 191-217; these read MGDP…VWSP and PPASDLPGYEPPPALSPLPPPAPSPPA. The span at 25–37 shows a compositional bias: gly residues; the sequence is EGTGGSEGVGGDG. Residues 38-114 constitute a DNA-binding region (TEA); sequence SPDAEGVWSP…QVLARRKSRE (77 aa). Residues 172 to 445 form a transcriptional activation region; that stretch reads WNVPDVKPFS…QYHIYRLVRD (274 aa). Residues 199-216 show a composition bias toward pro residues; it reads YEPPPALSPLPPPAPSPP.

Interacts with YAP1 and WWTR1/TAZ. As to expression, highest expression in brain. High levels also found in lung, testis and ovarian follicle cells. Lower levels in heart and spleen.

The protein resides in the nucleus. In terms of biological role, transcription factor which plays a key role in the Hippo signaling pathway, a pathway involved in organ size control and tumor suppression by restricting proliferation and promoting apoptosis. The core of this pathway is composed of a kinase cascade wherein MST1/MST2, in complex with its regulatory protein SAV1, phosphorylates and activates LATS1/2 in complex with its regulatory protein MOB1, which in turn phosphorylates and inactivates YAP1 oncoprotein and WWTR1/TAZ. Acts by mediating gene expression of YAP1 and WWTR1/TAZ, thereby regulating cell proliferation, migration and epithelial mesenchymal transition (EMT) induction. Binds to the SPH and GT-IIC 'enhansons' (5'-GTGGAATGT-3'). May be involved in the gene regulation of neural development. Binds to the M-CAT motif. This is Transcriptional enhancer factor TEF-4 (Tead2) from Mus musculus (Mouse).